An 840-amino-acid chain; its full sequence is Leucine--tRNA ligase (840 aa).

The short motif at 44 to 55 is the 'HIGH' region element; that stretch reads PYPSANGLHVGH. Residues 617 to 621 carry the 'KMSKS' region motif; the sequence is KMSKS. Lys-620 is an ATP binding site.

The protein belongs to the class-I aminoacyl-tRNA synthetase family.

It is found in the cytoplasm. The enzyme catalyses tRNA(Leu) + L-leucine + ATP = L-leucyl-tRNA(Leu) + AMP + diphosphate. This is Leucine--tRNA ligase from Borrelia garinii subsp. bavariensis (strain ATCC BAA-2496 / DSM 23469 / PBi) (Borreliella bavariensis).